Reading from the N-terminus, the 597-residue chain is Aspartate--tRNA(Asp/Asn) ligase (597 aa).

Glu170 is an L-aspartate binding site. The segment at 194–197 (QLFK) is aspartate. Residue Arg216 coordinates L-aspartate. ATP-binding positions include 216-218 (RDE) and Gln225. His448 contributes to the L-aspartate binding site. ATP is bound at residue Glu482. Arg489 lines the L-aspartate pocket. ATP is bound at residue 534–537 (GWDR). The segment at 558 to 597 (GGGVDPLTDAPAPITAAQRKESGIDAKPEKAEKAGKPADA) is disordered. The span at 575–597 (QRKESGIDAKPEKAEKAGKPADA) shows a compositional bias: basic and acidic residues.

The protein belongs to the class-II aminoacyl-tRNA synthetase family. Type 1 subfamily. Homodimer.

The protein resides in the cytoplasm. The enzyme catalyses tRNA(Asx) + L-aspartate + ATP = L-aspartyl-tRNA(Asx) + AMP + diphosphate. Its function is as follows. Aspartyl-tRNA synthetase with relaxed tRNA specificity since it is able to aspartylate not only its cognate tRNA(Asp) but also tRNA(Asn). Reaction proceeds in two steps: L-aspartate is first activated by ATP to form Asp-AMP and then transferred to the acceptor end of tRNA(Asp/Asn). This chain is Aspartate--tRNA(Asp/Asn) ligase, found in Mycobacteroides abscessus (strain ATCC 19977 / DSM 44196 / CCUG 20993 / CIP 104536 / JCM 13569 / NCTC 13031 / TMC 1543 / L948) (Mycobacterium abscessus).